A 782-amino-acid polypeptide reads, in one-letter code: E3 ubiquitin-protein ligase SopA (782 aa).

The disordered stretch occupies residues 137 to 171 (VSVSANNRPTVSEGRTPPVSPSLSLQATSSPSSPA). Residues 157-171 (PSLSLQATSSPSSPA) show a composition bias toward low complexity. The active-site Glycyl thioester intermediate is the Cys753.

Belongs to the SopA E3 ligase family. Post-translationally, ubiquitinated in the presence of host E1 ubiquitin-activating enzyme, E2 ubiquitin-conjugating enzyme and ubiquitin.

Its subcellular location is the secreted. The protein localises to the host cell. It catalyses the reaction S-ubiquitinyl-[E2 ubiquitin-conjugating enzyme]-L-cysteine + [acceptor protein]-L-lysine = [E2 ubiquitin-conjugating enzyme]-L-cysteine + N(6)-ubiquitinyl-[acceptor protein]-L-lysine.. In terms of biological role, effector proteins function to alter host cell physiology and promote bacterial survival in host tissues. This protein is an E3 ubiquitin ligase that interferes with host's ubiquitination pathway. This is E3 ubiquitin-protein ligase SopA (sopA) from Salmonella newport (strain SL254).